The chain runs to 290 residues: MTKDRLAALQAAQSDDEDMPEDVAVPVEGSFMEDFFKEVEEIRMMIDKIQANVEEVKKKHSAILSAPQSDEKTKQELEDLMADIKKTANRVRGKLKGIEQNIEQEEQQSKSNADLRIRKTQHSALSRKFVEVMTEYNRTQTDYRERCKGRIQRQLEITGRATTNEELEEMLEQGNSAVFTQGIIMETQQAKQTLADIEARHADIIKLENSIRELHDMFMDMAMLVESQGEMIDRIEYHVEHAMDYVQTATQDTKKALKYQSKARRKKIWIAICVLIAIIILVVFLAIYLT.

The disordered stretch occupies residues 1-21 (MTKDRLAALQAAQSDDEDMPE). Residues 1–267 (MTKDRLAALQ…KYQSKARRKK (267 aa)) are Cytoplasmic-facing. The 63-residue stretch at 194-256 (LADIEARHAD…QTATQDTKKA (63 aa)) folds into the t-SNARE coiled-coil homology domain. Residues 268 to 289 (IWIAICVLIAIIILVVFLAIYL) form a helical; Anchor for type IV membrane protein membrane-spanning segment. Position 290 (Thr-290) is a topological domain, vesicular.

The protein belongs to the syntaxin family. In terms of processing, (Microbial infection) Targeted and hydrolyzed by the light chain (LC) of P.bifermentans PMP1. Cleavage probably inhibits neurotransmitter release.

The protein resides in the cytoplasmic vesicle. Its subcellular location is the secretory vesicle. It is found in the synaptic vesicle membrane. In terms of biological role, plays a critical role in several secretory processes. The protein is Syntaxin-1A of Anopheles gambiae (African malaria mosquito).